Here is a 34-residue protein sequence, read N- to C-terminus: MEALVYTFLLVSTLGIIFFAIFFREPPKVPTKKN.

A helical transmembrane segment spans residues Ala-3 to Phe-23.

Belongs to the PsbT family. As to quaternary structure, PSII is composed of 1 copy each of membrane proteins PsbA, PsbB, PsbC, PsbD, PsbE, PsbF, PsbH, PsbI, PsbJ, PsbK, PsbL, PsbM, PsbT, PsbY, PsbZ, Psb30/Ycf12, at least 3 peripheral proteins of the oxygen-evolving complex and a large number of cofactors. It forms dimeric complexes.

Its subcellular location is the plastid. The protein localises to the chloroplast thylakoid membrane. Found at the monomer-monomer interface of the photosystem II (PS II) dimer, plays a role in assembly and dimerization of PSII. PSII is a light-driven water plastoquinone oxidoreductase, using light energy to abstract electrons from H(2)O, generating a proton gradient subsequently used for ATP formation. This chain is Photosystem II reaction center protein T, found in Solanum bulbocastanum (Wild potato).